We begin with the raw amino-acid sequence, 173 residues long: Alpha-crystallin A chain (173 aa).

M1 is subject to N-acetylmethionine. Positions 1 to 63 are required for complex formation with BFSP1 and BFSP2; sequence MDITIQHPWF…RTVLESGISE (63 aa). Q6 bears the Deamidated glutamine; partial mark. Residue S45 is modified to Phosphoserine. Q50 is modified (deamidated glutamine; partial). The 113-residue stretch at 52–164 folds into the sHSP domain; sequence LFRTVLESGI…SDRSIPVSRE (113 aa). K70 and K99 each carry N6-acetyllysine. Residues H100, E102, and H107 each coordinate Zn(2+). Phosphoserine is present on S122. The residue at position 123 (N123) is a Deamidated asparagine; partial. Residues 146 to 167 are compositionally biased toward basic and acidic residues; sequence IHSDMDASHSDRSIPVSREEKP. The disordered stretch occupies residues 146–173; it reads IHSDMDASHSDRSIPVSREEKPTLAPSS. Residue H154 coordinates Zn(2+). An O-linked (GlcNAc) serine glycan is attached at S162.

It belongs to the small heat shock protein (HSP20) family. Heteromer composed of three CRYAA and one CRYAB subunits. Inter-subunit bridging via zinc ions enhances stability, which is crucial as there is no protein turn over in the lens. Can also form homodimers and homotetramers (dimers of dimers) which serve as the building blocks of homooligomers. Within homooligomers, the zinc-binding motif is created from residues of 3 different molecules. His-100 and Glu-102 from one molecule are ligands of the zinc ion, and His-107 and His-154 residues from additional molecules complete the site with tetrahedral coordination geometry. Part of a complex required for lens intermediate filament formation composed of BFSP1, BFSP2 and CRYAA. In terms of processing, acetylation at Lys-70 may increase chaperone activity. Post-translationally, undergoes age-dependent proteolytical cleavage at the C-terminus.

Its subcellular location is the cytoplasm. The protein localises to the nucleus. In terms of biological role, contributes to the transparency and refractive index of the lens. Acts as a chaperone, preventing aggregation of various proteins under a wide range of stress conditions. Required for the correct formation of lens intermediate filaments as part of a complex composed of BFSP1, BFSP2 and CRYAA. The chain is Alpha-crystallin A chain (CRYAA) from Osphranter rufus (Red kangaroo).